The primary structure comprises 154 residues: Cyanate hydratase (154 aa).

Active-site residues include Arg-100, Glu-103, and Ser-126.

It belongs to the cyanase family.

It catalyses the reaction cyanate + hydrogencarbonate + 3 H(+) = NH4(+) + 2 CO2. In terms of biological role, catalyzes the reaction of cyanate with bicarbonate to produce ammonia and carbon dioxide. The chain is Cyanate hydratase from Aspergillus fumigatus (strain CBS 144.89 / FGSC A1163 / CEA10) (Neosartorya fumigata).